A 174-amino-acid polypeptide reads, in one-letter code: MKKVVKYLISLILAIIIVLFVQTFVIVGHVIPNNDMSPTLNKGDRVIVNKIKVTFNQLNNGDIITYRRGNEIYTSRIIAKPGQSMAFRQGQLYRDDRPVDASYAKNRKIKDFSLRNFKKLDGDIIPPNNFVVLNDHDNNQHDSRQFGLIDKKDIIGNISLRYYPFSKWTIQFKS.

The Cytoplasmic segment spans residues 1 to 7; the sequence is MKKVVKY. Residues 8–28 traverse the membrane as a helical segment; the sequence is LISLILAIIIVLFVQTFVIVG. Residues 29-174 lie on the Extracellular side of the membrane; sequence HVIPNNDMSP…FSKWTIQFKS (146 aa).

The protein belongs to the peptidase S26 family.

The protein resides in the cell membrane. Catalytically inactive. In Staphylococcus aureus (strain MRSA252), this protein is Inactive signal peptidase IA (spsA).